The following is a 506-amino-acid chain: Aerotaxis receptor (506 aa).

The Cytoplasmic portion of the chain corresponds to 1 to 166 (MSSHPYVTQQ…PSLPLRWRAR (166 aa)). A helical transmembrane segment spans residues 167–186 (GVMTLMFILLAAMLWFVAAP). Topologically, residues 187–190 (VVTY) are periplasmic. The chain crosses the membrane as a helical span at residues 191-209 (ILCALVVLLASACFEWQIV). The Cytoplasmic segment spans residues 210–506 (RPIENVAHQA…RLEDAVTVLH (297 aa)). The Methyl-accepting transducer domain maps to 263-492 (QVSSVRNGSE…ESAQVSAMVK (230 aa)).

This sequence belongs to the methyl-accepting chemotaxis (MCP) protein family.

Its subcellular location is the cell inner membrane. Signal transducer for aerotaxis. The aerotactic response is the accumulation of cells around air bubbles. The nature of the sensory stimulus detected by this protein is the proton motive force or cellular redox state. It uses a FAD prosthetic group as a redox sensor to monitor oxygen levels. This is Aerotaxis receptor (aer) from Escherichia coli (strain K12).